A 510-amino-acid polypeptide reads, in one-letter code: NAD(P)H-quinone oxidoreductase subunit 2 B, chloroplastic (510 aa).

13 consecutive transmembrane segments (helical) span residues Leu-24 to Leu-44, Ile-57 to Phe-77, Ile-99 to Ile-119, Met-124 to Cys-144, Leu-149 to Tyr-169, Tyr-183 to Gly-203, Pro-227 to Ala-247, Trp-295 to Ile-315, Met-323 to Asp-343, Tyr-354 to Leu-374, Ala-395 to Phe-415, Leu-418 to Leu-438, and Met-484 to Ile-504.

The protein belongs to the complex I subunit 2 family. NDH is composed of at least 16 different subunits, 5 of which are encoded in the nucleus.

It is found in the plastid. It localises to the chloroplast thylakoid membrane. The enzyme catalyses a plastoquinone + NADH + (n+1) H(+)(in) = a plastoquinol + NAD(+) + n H(+)(out). The catalysed reaction is a plastoquinone + NADPH + (n+1) H(+)(in) = a plastoquinol + NADP(+) + n H(+)(out). Its function is as follows. NDH shuttles electrons from NAD(P)H:plastoquinone, via FMN and iron-sulfur (Fe-S) centers, to quinones in the photosynthetic chain and possibly in a chloroplast respiratory chain. The immediate electron acceptor for the enzyme in this species is believed to be plastoquinone. Couples the redox reaction to proton translocation, and thus conserves the redox energy in a proton gradient. This chain is NAD(P)H-quinone oxidoreductase subunit 2 B, chloroplastic, found in Helianthus annuus (Common sunflower).